We begin with the raw amino-acid sequence, 1016 residues long: Mastermind-like protein 1 (1016 aa).

Residues 1-123 are required for interaction with NOTCH proteins; sequence MVLPTCPMAE…NLDSATSPQN (123 aa). Phosphoserine is present on S45. 5 disordered regions span residues 65–184, 263–487, 561–617, 658–681, and 796–953; these read QAKA…LGLD, PDED…PSHV, KPKP…SQQQ, EKQQ…QGSF, and AYGQ…GGRA. Basic residues predominate over residues 67-76; the sequence is KAKRAGKHRQ. Residues 93–115 show a composition bias toward basic and acidic residues; that stretch reads DAADGPEHGRPATHLHDTVKRNL. A compositionally biased stretch (polar residues) spans 116-129; the sequence is DSATSPQNGDQQNG. Phosphoserine is present on S120. Residues 263–282 show a composition bias toward basic and acidic residues; that stretch reads PDEDMKDLFNEDFEEKKDPE. The span at 283 to 292 shows a compositional bias: polar residues; that stretch reads SSGSATQTPL. S303 and S314 each carry phosphoserine. Residues 322-353 are compositionally biased toward polar residues; it reads AGQTFLGPSSAPVSTDSPSLGGSQTLFHTSGQ. Residue S360 is modified to Phosphoserine. The span at 392–403 shows a compositional bias: polar residues; that stretch reads ELSSAHQLQQIA. Positions 413–426 are enriched in low complexity; it reads QNPQQATPAPAPGQ. Composition is skewed to polar residues over residues 427–439, 451–463, 577–595, and 602–617; these read MSTW…SHSS, SPSS…TNSK, QEQN…SVGT, and VASS…SQQQ. A compositionally biased stretch (low complexity) spans 801–810; sequence SLGSSGLSQQ. An N6-acetyllysine modification is found at K822. Positions 834–885 are enriched in polar residues; it reads GQNSSWQHQGMPNLSGQTPGNSNVSPFTAASSFHMQQQAHLKMSSPQFSQAV. Phosphoserine is present on S1015.

It belongs to the mastermind family. As to quaternary structure, interacts (via N-terminus) with NOTCH1, NOTCH2, NOTCH3 and NOTCH4 (via ankyrin repeat region). Interacts (via N-terminus) with p53 (via DNA-binding region). Forms a DNA-binding complex with Notch proteins and RBPSUH/RBP-J kappa/CBF1. Also binds CREBBP/CBP and CDK8. Forms a complex with PRAG1, NOTCH1 and MAML1, in a MAML1-dependent manner. In terms of tissue distribution, widely expressed with highest levels in heart, pancreas, peripheral blood leukocytes and spleen.

The protein localises to the nucleus speckle. Acts as a transcriptional coactivator for NOTCH proteins. Has been shown to amplify NOTCH-induced transcription of HES1. Enhances phosphorylation and proteolytic turnover of the NOTCH intracellular domain in the nucleus through interaction with CDK8. Binds to CREBBP/CBP which promotes nucleosome acetylation at NOTCH enhancers and activates transcription. Induces phosphorylation and localization of CREBBP to nuclear foci. Plays a role in hematopoietic development by regulating NOTCH-mediated lymphoid cell fate decisions. The sequence is that of Mastermind-like protein 1 from Homo sapiens (Human).